Here is a 340-residue protein sequence, read N- to C-terminus: Ferredoxin--NADP reductase (340 aa).

The FAD site is built by aspartate 33, glutamine 41, tyrosine 46, alanine 86, phenylalanine 120, aspartate 286, and threonine 327.

This sequence belongs to the ferredoxin--NADP reductase type 2 family. As to quaternary structure, homodimer. FAD is required as a cofactor.

It carries out the reaction 2 reduced [2Fe-2S]-[ferredoxin] + NADP(+) + H(+) = 2 oxidized [2Fe-2S]-[ferredoxin] + NADPH. The protein is Ferredoxin--NADP reductase of Rickettsia rickettsii (strain Sheila Smith).